A 339-amino-acid polypeptide reads, in one-letter code: Ketol-acid reductoisomerase (NADP(+)) (339 aa).

The KARI N-terminal Rossmann domain maps to 1–182; that stretch reads MRVYYDRDAD…GGGRAGIIET (182 aa). NADP(+) contacts are provided by residues 24–27, arginine 48, serine 51, threonine 53, and 83–86; these read YGSQ and DELQ. Histidine 108 is a catalytic residue. Glycine 134 contributes to the NADP(+) binding site. The region spanning 183–328 is the KARI C-terminal knotted domain; sequence TFKEECETDL…AKLRGMMPWI (146 aa). Residues aspartate 191, glutamate 195, glutamate 227, and glutamate 231 each coordinate Mg(2+). A substrate-binding site is contributed by serine 252.

It belongs to the ketol-acid reductoisomerase family. Mg(2+) serves as cofactor.

The catalysed reaction is (2R)-2,3-dihydroxy-3-methylbutanoate + NADP(+) = (2S)-2-acetolactate + NADPH + H(+). It catalyses the reaction (2R,3R)-2,3-dihydroxy-3-methylpentanoate + NADP(+) = (S)-2-ethyl-2-hydroxy-3-oxobutanoate + NADPH + H(+). The protein operates within amino-acid biosynthesis; L-isoleucine biosynthesis; L-isoleucine from 2-oxobutanoate: step 2/4. It functions in the pathway amino-acid biosynthesis; L-valine biosynthesis; L-valine from pyruvate: step 2/4. Its function is as follows. Involved in the biosynthesis of branched-chain amino acids (BCAA). Catalyzes an alkyl-migration followed by a ketol-acid reduction of (S)-2-acetolactate (S2AL) to yield (R)-2,3-dihydroxy-isovalerate. In the isomerase reaction, S2AL is rearranged via a Mg-dependent methyl migration to produce 3-hydroxy-3-methyl-2-ketobutyrate (HMKB). In the reductase reaction, this 2-ketoacid undergoes a metal-dependent reduction by NADPH to yield (R)-2,3-dihydroxy-isovalerate. The protein is Ketol-acid reductoisomerase (NADP(+)) of Methylorubrum populi (strain ATCC BAA-705 / NCIMB 13946 / BJ001) (Methylobacterium populi).